Reading from the N-terminus, the 807-residue chain is Glycerol-3-phosphate acyltransferase (807 aa).

The HXXXXD motif motif lies at 305 to 310; the sequence is CHRSHM.

The protein belongs to the GPAT/DAPAT family.

It localises to the cell inner membrane. It catalyses the reaction sn-glycerol 3-phosphate + an acyl-CoA = a 1-acyl-sn-glycero-3-phosphate + CoA. The protein operates within phospholipid metabolism; CDP-diacylglycerol biosynthesis; CDP-diacylglycerol from sn-glycerol 3-phosphate: step 1/3. The protein is Glycerol-3-phosphate acyltransferase of Escherichia coli O139:H28 (strain E24377A / ETEC).